Reading from the N-terminus, the 327-residue chain is Phenylalanine--tRNA ligase alpha subunit (327 aa).

Residue glutamate 252 coordinates Mg(2+).

The protein belongs to the class-II aminoacyl-tRNA synthetase family. Phe-tRNA synthetase alpha subunit type 1 subfamily. In terms of assembly, tetramer of two alpha and two beta subunits. It depends on Mg(2+) as a cofactor.

It localises to the cytoplasm. It catalyses the reaction tRNA(Phe) + L-phenylalanine + ATP = L-phenylalanyl-tRNA(Phe) + AMP + diphosphate + H(+). This chain is Phenylalanine--tRNA ligase alpha subunit, found in Shigella dysenteriae serotype 1 (strain Sd197).